The chain runs to 403 residues: MSGRVGDLSPKQEEALAKFRENVQDVLPALPNPDDYFLLRWLRARSFDLQKSEAMLRKHVEFRKQKDIDKIISWQPPEVIQQYLSGGRCGYDLDGCPVWYDIIGPLDAKGLLFSASKQDLLRTKMRDCELLLQECTQQTAKLGKKIETITMIYDCEGLGLKHLWKPAVEAYGEFLTMFEENYPETLKRLFVVKAPKLFPVAYNLIKPFLSEDTRKKIMVLGANWKEVLLKHISPDQLPVEYGGTMTDPDGNPKCKSKINYGGDIPKQYYVRDQVKQQYEHSVQISRGSSHQVEYEILFPGCVLRWQFMSEGSDVGFGIFLKTKMGERQRAGEMTEVLPNQRYNSHMVPEDGTLTCSEPGIYVLRFDNTYSFIHAKKVSFTVEVLLPDKAAEEKLNQQGAVTPK.

Residues Lys-11 and Lys-51 each carry the N6-succinyllysine modification. The CRAL-TRIO domain maps to 76–249 (PPEVIQQYLS…EYGGTMTDPD (174 aa)). N6-succinyllysine is present on residues Lys-253 and Lys-257. The region spanning 275 to 383 (KQQYEHSVQI…AKKVSFTVEV (109 aa)) is the GOLD domain. Residue Lys-393 is modified to N6-succinyllysine.

In terms of assembly, monomer. Widely expressed. High expression in liver and small intestine.

The protein resides in the cytoplasm. Its subcellular location is the nucleus. Its function is as follows. Carrier protein. Binds to some hydrophobic molecules and promotes their transfer between the different cellular sites. Binds with high affinity to alpha-tocopherol. Also binds with a weaker affinity to other tocopherols and to tocotrienols. May have a transcriptional activatory activity via its association with alpha-tocopherol. Probably recognizes and binds some squalene structure, suggesting that it may regulate cholesterol biosynthesis by increasing the transfer of squalene to a metabolic active pool in the cell. This is SEC14-like protein 2 (Sec14l2) from Rattus norvegicus (Rat).